Here is a 319-residue protein sequence, read N- to C-terminus: Olfactory receptor 13F1 (319 aa).

Topologically, residues 1–25 are extracellular; it reads MFPANWTSVKVFFFLGFFHYPKVQV. An N-linked (GlcNAc...) asparagine glycan is attached at Asn5. A helical membrane pass occupies residues 26-46; the sequence is IIFAVCLLMYLITLLGNIFLI. The Cytoplasmic portion of the chain corresponds to 47–54; the sequence is SITILDSH. Residues 55-75 traverse the membrane as a helical segment; that stretch reads LHTPMYLFLSNLSFLDIWYSS. Topologically, residues 76–99 are extracellular; sequence SALSPMLANFVSGRNTISFSGCAT. Cys97 and Cys189 form a disulfide bridge. The chain crosses the membrane as a helical span at residues 100–120; sequence QMYLSLAMGSTECVLLPMMAY. At 121-139 the chain is on the cytoplasmic side; it reads DRYVAICNPLRYPVIMNRR. Residues 140–160 form a helical membrane-spanning segment; sequence TCVQIAAGSWMTGCLTAMVEM. At 161-197 the chain is on the extracellular side; it reads MSVLPLSLCGNSIINHFTCEILAILKLVCVDTSLVQL. Residues 198-217 form a helical membrane-spanning segment; sequence IMLVISVLLLPMPMLLICIS. Residues 218–237 are Cytoplasmic-facing; sequence YAFILASILRISSVEGRSKA. The chain crosses the membrane as a helical span at residues 238–258; that stretch reads FSTCTAHLMVVVLFYGTALSM. The Extracellular segment spans residues 259–271; sequence HLKPSAVDSQEID. The helical transmembrane segment at 272–292 threads the bilayer; sequence KFMALVYAGQTPMLNPIIYSL. Over 293 to 319 the chain is Cytoplasmic; it reads RNKEVKVALKKLLIRNHFNTAFISILK.

It belongs to the G-protein coupled receptor 1 family.

The protein resides in the cell membrane. Functionally, odorant receptor. The chain is Olfactory receptor 13F1 (OR13F1) from Homo sapiens (Human).